The primary structure comprises 89 residues: DNA-directed RNA polymerase subunit Rpo6 (89 aa).

This sequence belongs to the archaeal Rpo6/eukaryotic RPB6 RNA polymerase subunit family. In terms of assembly, part of the 13-subunit RNA polymerase complex.

Its subcellular location is the cytoplasm. The catalysed reaction is RNA(n) + a ribonucleoside 5'-triphosphate = RNA(n+1) + diphosphate. Its function is as follows. DNA-dependent RNA polymerase (RNAP) catalyzes the transcription of DNA into RNA using the four ribonucleoside triphosphates as substrates. Functionally, reconstitution experiments show this subunit is required for basic activity. In Sulfolobus acidocaldarius (strain ATCC 33909 / DSM 639 / JCM 8929 / NBRC 15157 / NCIMB 11770), this protein is DNA-directed RNA polymerase subunit Rpo6.